The chain runs to 1151 residues: Zinc finger protein ZFPM2 (1151 aa).

Residues 1–13 (MSRRKQSKPRQIK) are compositionally biased toward basic residues. Residues 1 to 102 (MSRRKQSKPR…ETDDWDGPGE (102 aa)) are disordered. Composition is skewed to acidic residues over residues 18-33 (DAIE…EETD) and 70-82 (EGIQ…DGDT). The CCHC FOG-type 1 zinc-finger motif lies at 244–277 (IVNKDIFPCKSCGIWYRSERNLQAHLMYYCSGRQ). Residues Cys-252, Cys-255, His-268, and Cys-273 each contribute to the Zn(2+) site. A C2H2-type 1 zinc finger spans residues 296 to 320 (SLCPFPQCTKSFSNARALEMHLNSH). A Glycyl lysine isopeptide (Lys-Gly) (interchain with G-Cter in SUMO1) cross-link involves residue Lys-324. 2 C2H2-type zinc fingers span residues 335–357 (LKCT…LFSH) and 363–385 (FRCN…QELH). A disordered region spans residues 389–487 (GKLPRESDME…RLASSPVQPN (99 aa)). Composition is skewed to polar residues over residues 401 to 410 (PSATEDSLQP) and 419 to 431 (ELPQ…QTKD). Lys-444 is covalently cross-linked (Glycyl lysine isopeptide (Lys-Gly) (interchain with G-Cter in SUMO2)). The segment covering 447–485 (LFLTNQRPEIQPTTNKQSFSYTKIKSEPSSPRLASSPVQ) has biased composition (polar residues). A Glycyl lysine isopeptide (Lys-Gly) (interchain with G-Cter in SUMO1) cross-link involves residue Lys-471. Ser-532 carries the post-translational modification Phosphoserine. The segment at 542–575 (PLMPKGATCFECNITFNNLDNYLVHKKHYCSSRW) adopts a CCHC FOG-type 2 zinc-finger fold. Zn(2+) contacts are provided by Cys-550, Cys-553, His-566, and Cys-571. At Ser-581 the chain carries Phosphoserine. A disordered region spans residues 636–683 (GPNGKGHDKDFSTQTKKLSTSSNNDDKINGKPVDVKNPSVPLVDGESD). A compositionally biased stretch (polar residues) spans 647–658 (STQTKKLSTSSN). The CCHC FOG-type 3 zinc finger occupies 681–714 (ESDPNKTTCEACNITFSRHETYMVHKQYYCATRH). Zn(2+) contacts are provided by Cys-689, Cys-692, His-705, and Cys-710. A Nuclear localization signal motif is present at residues 736–740 (RKRRK). An interaction with CTBP2 region spans residues 829 to 835 (PIDLSKK). Residues 848-881 (KRLLDYHECTVCKISFNKVENYLAHKQNFCPVTA) form a CCHC FOG-type 4 zinc finger. Residues Cys-856, Cys-859, His-872, and Cys-877 each contribute to the Zn(2+) site. At Ser-904 the chain carries Phosphoserine. Residues Lys-915 and Lys-955 each participate in a glycyl lysine isopeptide (Lys-Gly) (interchain with G-Cter in SUMO1) cross-link. Position 1014 is a phosphoserine (Ser-1014). The disordered stretch occupies residues 1051–1095 (DERPAANPQQENISQNPQHEDDHKSPSWISENPLAANENVSPGIP). Positions 1057-1067 (NPQQENISQNP) are enriched in polar residues. Residues 1113 to 1146 (QAPTSGKYCRLCDIQFNNLSNFITHKKFYCSSHA) form a CCHC FOG-type 5 zinc finger. Zn(2+) is bound by residues Cys-1121, Cys-1124, His-1137, and Cys-1142.

It belongs to the FOG (Friend of GATA) family. As to quaternary structure, interacts with the N-terminal zinc-finger of GATA4, GATA5 and probably GATA6. Interacts with retinoid nuclear receptor RXRA when ligand bound. Interacts with corepressor CTBP2; this interaction is however not essential for corepressor activity. Able to bind GATA1 in vitro. Interacts with NR2F2 and NR2F6. Interacts with ATOH8; mediates indirect interaction with GATA4. In terms of processing, sumoylation reduces transcriptional repression activity. As to expression, widely expressed at low level.

The protein localises to the nucleus. Transcription regulator that plays a central role in heart morphogenesis and development of coronary vessels from epicardium, by regulating genes that are essential during cardiogenesis. Essential cofactor that acts via the formation of a heterodimer with transcription factors of the GATA family GATA4, GATA5 and GATA6. Such heterodimer can both activate or repress transcriptional activity, depending on the cell and promoter context. Also required in gonadal differentiation, possibly be regulating expression of SRY. Probably acts a corepressor of NR2F2. This is Zinc finger protein ZFPM2 (ZFPM2) from Homo sapiens (Human).